Here is a 146-residue protein sequence, read N- to C-terminus: MORN repeat-containing protein 4 (146 aa).

MORN repeat units lie at residues 16–38 (YRGE…DGGT), 39–61 (YLGH…DGSR), 62–84 (YEGE…DNMT), and 85–107 (FEGE…DGSH).

In terms of assembly, interacts with MYO3A.

The protein localises to the cytoplasm. It is found in the cell projection. It localises to the filopodium tip. Its subcellular location is the stereocilium. Its function is as follows. Plays a role in promoting axonal degeneration following neuronal injury by toxic insult or trauma. The polypeptide is MORN repeat-containing protein 4 (Morn4) (Mus musculus (Mouse)).